Consider the following 112-residue polypeptide: MATPKSSSANRKKGGKKSHRKPKRTWNVYINRSLKSINNHMSMSGRTMKIVNSFVNDLFERIACEAATVVRVNKKRTLGARELQTAVRLVLPADLAKHAMAEGTKAVSHASS.

The disordered stretch occupies residues 1–24; that stretch reads MATPKSSSANRKKGGKKSHRKPKR. Basic residues predominate over residues 10–24; it reads NRKKGGKKSHRKPKR.

The protein belongs to the histone H2B family. As to quaternary structure, the nucleosome is a histone octamer containing two molecules each of H2A, H2B, H3 and H4 assembled in one H3-H4 heterotetramer and two H2A-H2B heterodimers. The octamer wraps approximately 147 bp of DNA.

It is found in the nucleus. The protein localises to the chromosome. Its function is as follows. Core component of nucleosome. Nucleosomes wrap and compact DNA into chromatin, limiting DNA accessibility to the cellular machineries which require DNA as a template. Histones thereby play a central role in transcription regulation, DNA repair, DNA replication and chromosomal stability. DNA accessibility is regulated via a complex set of post-translational modifications of histones, also called histone code, and nucleosome remodeling. The sequence is that of Histone H2B from Trypanosoma cruzi.